The following is a 393-amino-acid chain: Ceramide synthase 4 (393 aa).

The Lumenal portion of the chain corresponds to 1–31 (MWSSLNDWLWNERLWLPANISWAQLEDHDGL). A glycan (N-linked (GlcNAc...) asparagine) is linked at Asn-19. The helical transmembrane segment at 32-52 (VFPHPQDTLMAVPLALALVVV) threads the bilayer. The segment at 67–128 (WLGVRNQIRR…RRRRNQDRPC (62 aa)) is homeobox-like. Positions 131-332 (KKFCESSWKF…ILCMIYSFIK (202 aa)) constitute a TLC domain. A run of 4 helical transmembrane segments spans residues 140 to 160 (FVFY…ESWL), 179 to 199 (LYHW…TLPF), 209 to 229 (QVIH…LNLL), and 260 to 280 (MCDT…LVLF). Positions 291-301 (ESIGNFSPFFG) match the Last loop motif motif. A helical membrane pass occupies residues 304 to 324 (FLNILLVILQLLHVFWSWLIL). Topologically, residues 325-393 (CMIYSFIKKG…RMVNRHTPAT (69 aa)) are cytoplasmic. Phosphoserine occurs at positions 342, 349, and 350. Residues 346-356 (ELDSSDGEAAE) are compositionally biased toward acidic residues. Positions 346–393 (ELDSSDGEAAEECPQMKNGAAQRPGAAPTDGPRSRAAGRMVNRHTPAT) are disordered.

Phosphorylated at the C-terminus by CK2.

Its subcellular location is the endoplasmic reticulum membrane. It catalyses the reaction sphinganine + octadecanoyl-CoA = N-(octadecanoyl)-sphinganine + CoA + H(+). The catalysed reaction is eicosanoyl-CoA + sphinganine = N-eicosanoylsphinganine + CoA + H(+). It carries out the reaction docosanoyl-CoA + sphinganine = N-docosanoylsphinganine + CoA + H(+). The enzyme catalyses tetracosanoyl-CoA + sphinganine = N-tetracosanoylsphinganine + CoA + H(+). It catalyses the reaction hexacosanoyl-CoA + sphinganine = N-hexacosanoylsphinganine + CoA + H(+). The catalysed reaction is a fatty acyl-CoA + sphing-4-enine = an N-acylsphing-4-enine + CoA + H(+). It carries out the reaction sphing-4-enine + octadecanoyl-CoA = N-octadecanoylsphing-4-enine + CoA + H(+). The enzyme catalyses hexadecasphinganine + octadecanoyl-CoA = N-octadecanoylhexadecasphinganine + CoA + H(+). It participates in lipid metabolism; sphingolipid metabolism. Functionally, ceramide synthase that catalyzes formation of ceramide from sphinganine and acyl-CoA substrates, with high selectivity toward long and very-long chains (C18:0-C22:0) as acyl donor. This Bos taurus (Bovine) protein is Ceramide synthase 4.